The primary structure comprises 116 residues: uncharacterized protein (116 aa).

The interval 64–116 (RRFYSGTVNRNARSAGAASRSTSSVKRPLESKKRNARPETEKWCASYSAGNRR) is disordered. Over residues 73-87 (RNARSAGAASRSTSS) the composition is skewed to low complexity. A compositionally biased stretch (basic and acidic residues) spans 90-105 (RPLESKKRNARPETEK).

This is an uncharacterized protein from Saccharomyces cerevisiae (strain ATCC 204508 / S288c) (Baker's yeast).